The following is a 505-amino-acid chain: Maturase K (505 aa).

Belongs to the intron maturase 2 family. MatK subfamily.

The protein localises to the plastid. It localises to the chloroplast. Its function is as follows. Usually encoded in the trnK tRNA gene intron. Probably assists in splicing its own and other chloroplast group II introns. The chain is Maturase K from Beta vulgaris (Sugar beet).